A 428-amino-acid chain; its full sequence is Serine--tRNA ligase (428 aa).

235-237 provides a ligand contact to L-serine; it reads TAE. 266–268 contacts ATP; it reads RSE. E289 lines the L-serine pocket. 353–356 provides a ligand contact to ATP; it reads EISS. S389 provides a ligand contact to L-serine.

The protein belongs to the class-II aminoacyl-tRNA synthetase family. Type-1 seryl-tRNA synthetase subfamily. As to quaternary structure, homodimer. The tRNA molecule binds across the dimer.

Its subcellular location is the cytoplasm. It catalyses the reaction tRNA(Ser) + L-serine + ATP = L-seryl-tRNA(Ser) + AMP + diphosphate + H(+). The enzyme catalyses tRNA(Sec) + L-serine + ATP = L-seryl-tRNA(Sec) + AMP + diphosphate + H(+). The protein operates within aminoacyl-tRNA biosynthesis; selenocysteinyl-tRNA(Sec) biosynthesis; L-seryl-tRNA(Sec) from L-serine and tRNA(Sec): step 1/1. In terms of biological role, catalyzes the attachment of serine to tRNA(Ser). Is also able to aminoacylate tRNA(Sec) with serine, to form the misacylated tRNA L-seryl-tRNA(Sec), which will be further converted into selenocysteinyl-tRNA(Sec). In Shewanella halifaxensis (strain HAW-EB4), this protein is Serine--tRNA ligase.